The sequence spans 235 residues: Ribonuclease P protein component 3 (235 aa).

It belongs to the eukaryotic/archaeal RNase P protein component 3 family. Consists of a catalytic RNA component and at least 4-5 protein subunits.

The protein resides in the cytoplasm. The enzyme catalyses Endonucleolytic cleavage of RNA, removing 5'-extranucleotides from tRNA precursor.. Its function is as follows. Part of ribonuclease P, a protein complex that generates mature tRNA molecules by cleaving their 5'-ends. The chain is Ribonuclease P protein component 3 from Haloarcula marismortui (strain ATCC 43049 / DSM 3752 / JCM 8966 / VKM B-1809) (Halobacterium marismortui).